The chain runs to 309 residues: Protein FdhE (309 aa).

Belongs to the FdhE family.

The protein localises to the cytoplasm. In terms of biological role, necessary for formate dehydrogenase activity. This is Protein FdhE from Salmonella enteritidis PT4 (strain P125109).